Reading from the N-terminus, the 407-residue chain is MSDIDNNLTSQTHQQATHQQETLDLSIALLERPSVTPNDDGCQDILSERLTQAGFDCEFMYYGDRQAKGEHAEVKNLWARRGTSNPVICFAGHTDVVPTGDEKNWTYPPFTPTIADGYLWARGAADMKTGIAAFTIAAERFVANHPQHNGSIAFLITSDEEGPSINGTVKVIETLEARQEKITYCLVGEPSSTDTLGDIIKNGRRGSLGAVLTVTGKQGHVAYPHLASNPIHAAMSALSELTNASWDNGNDYFPATSLQISNINGGTGATNVIPETLEVVFNFRFSTETTEDELKAKTHAIFDKYFKDSKAKYDIHWKLSGQPFLTPEGKLVSACQQAIKSVTGTDTTLSTSGGTSDGRFIAPTGAQVVELGVRNATIHQVDEKVEVDDLGRLAQIYERILENLLLD.

Over residues 1–10 the composition is skewed to polar residues; sequence MSDIDNNLTS. The interval 1–20 is disordered; the sequence is MSDIDNNLTSQTHQQATHQQ. Residues 11–20 show a composition bias toward low complexity; it reads QTHQQATHQQ. His93 contributes to the Zn(2+) binding site. Residue Asp95 is part of the active site. Asp126 provides a ligand contact to Zn(2+). Glu160 serves as the catalytic Proton acceptor. Residues Glu161, Glu189, and His379 each contribute to the Zn(2+) site.

Belongs to the peptidase M20A family. DapE subfamily. As to quaternary structure, homodimer. Zn(2+) serves as cofactor. The cofactor is Co(2+).

The enzyme catalyses N-succinyl-(2S,6S)-2,6-diaminopimelate + H2O = (2S,6S)-2,6-diaminopimelate + succinate. Its pathway is amino-acid biosynthesis; L-lysine biosynthesis via DAP pathway; LL-2,6-diaminopimelate from (S)-tetrahydrodipicolinate (succinylase route): step 3/3. Functionally, catalyzes the hydrolysis of N-succinyl-L,L-diaminopimelic acid (SDAP), forming succinate and LL-2,6-diaminopimelate (DAP), an intermediate involved in the bacterial biosynthesis of lysine and meso-diaminopimelic acid, an essential component of bacterial cell walls. The protein is Succinyl-diaminopimelate desuccinylase of Psychrobacter arcticus (strain DSM 17307 / VKM B-2377 / 273-4).